Reading from the N-terminus, the 60-residue chain is Putative SERF-like protein (60 aa).

Residues 1-53 show a composition bias toward basic and acidic residues; the sequence is MTRGNQRDLARQKNQKKQADLTKGKRTDNLTVEQRKARDAELMREKQKKKEEA. Positions 1–60 are disordered; the sequence is MTRGNQRDLARQKNQKKQADLTKGKRTDNLTVEQRKARDAELMREKQKKKEEAAAAGTSK.

The protein belongs to the SERF family.

In Drosophila melanogaster (Fruit fly), this protein is Putative SERF-like protein.